The primary structure comprises 104 residues: SQAALAVNISAARGLQDVLRTNLGPKGTMKMLVSGAGDIKLTKDGNVLLHEMQIQHPTASLIAKVATAQDDITGDGXTSNVLIIGELLKQADLYISEGLHPRII.

Position 24 (G24) interacts with ADP. G24 is a binding site for ATP. D75 serves as a coordination point for Mg(2+). ADP is bound by residues G76, T78, and S79. 2 residues coordinate ATP: G76 and T78.

This sequence belongs to the TCP-1 chaperonin family. In terms of assembly, component of the chaperonin-containing T-complex (TRiC), a hexadecamer composed of two identical back-to-back stacked rings enclosing a protein folding chamber. Each ring is made up of eight different subunits: TCP1/CCT1, CCT2, CCT3, CCT4, CCT5, CCT6A/CCT6, CCT7, CCT8. Interacts with PACRG.

Its subcellular location is the cytoplasm. The catalysed reaction is ATP + H2O = ADP + phosphate + H(+). Component of the chaperonin-containing T-complex (TRiC), a molecular chaperone complex that assists the folding of actin, tubulin and other proteins upon ATP hydrolysis. The TRiC complex mediates the folding of WRAP53/TCAB1, thereby regulating telomere maintenance. The protein is T-complex protein 1 subunit zeta (CCT6) of Sus scrofa (Pig).